Reading from the N-terminus, the 201-residue chain is Cell division protein SepF (201 aa).

Residues 1 to 94 are disordered; sequence MALKDLFSGF…TTSKNNARNV (94 aa). A compositionally biased stretch (acidic residues) spans 13–28; sequence VEEEDDELEAPPEENE. Low complexity predominate over residues 35–44; the sequence is PKQQAQSQNQ. A compositionally biased stretch (polar residues) spans 59–88; it reads SIQSVPKKQSTRLQQSSGERKYQMNNTTSK.

This sequence belongs to the SepF family. In terms of assembly, homodimer. Interacts with FtsZ.

Its subcellular location is the cytoplasm. Functionally, cell division protein that is part of the divisome complex and is recruited early to the Z-ring. Probably stimulates Z-ring formation, perhaps through the cross-linking of FtsZ protofilaments. Its function overlaps with FtsA. This is Cell division protein SepF from Staphylococcus saprophyticus subsp. saprophyticus (strain ATCC 15305 / DSM 20229 / NCIMB 8711 / NCTC 7292 / S-41).